We begin with the raw amino-acid sequence, 336 residues long: Pentalenene synthase (336 aa).

The Mg(2+) site is built by D80, D84, N219, S223, and E227. The DDXXD motif motif lies at 80–84 (DDLFD).

The protein belongs to the terpene synthase family. Monomer. The cofactor is Mg(2+).

The enzyme catalyses (2E,6E)-farnesyl diphosphate = pentalenene + diphosphate. Its pathway is antibiotic biosynthesis; neopentalenolactone biosynthesis. Catalyzes the cyclization of farnesyl diphosphate (FPP) to the tricyclic sesquiterpene pentalenene in the biosynthesis of neopentalenolactone antibiotic. The protein is Pentalenene synthase (ptlA) of Streptomyces avermitilis (strain ATCC 31267 / DSM 46492 / JCM 5070 / NBRC 14893 / NCIMB 12804 / NRRL 8165 / MA-4680).